A 505-amino-acid chain; its full sequence is 2,3-bisphosphoglycerate-independent phosphoglycerate mutase (505 aa).

Residues aspartate 12 and serine 62 each contribute to the Mn(2+) site. Catalysis depends on serine 62, which acts as the Phosphoserine intermediate. Residues histidine 123, 153-154, arginine 185, arginine 191, 257-260, and lysine 330 each bind substrate; these read RD and RPDR. Mn(2+) is bound by residues aspartate 397, histidine 401, aspartate 438, histidine 439, and histidine 456.

It belongs to the BPG-independent phosphoglycerate mutase family. In terms of assembly, monomer. Mn(2+) is required as a cofactor.

It carries out the reaction (2R)-2-phosphoglycerate = (2R)-3-phosphoglycerate. Its pathway is carbohydrate degradation; glycolysis; pyruvate from D-glyceraldehyde 3-phosphate: step 3/5. Functionally, catalyzes the interconversion of 2-phosphoglycerate and 3-phosphoglycerate. This is 2,3-bisphosphoglycerate-independent phosphoglycerate mutase from Staphylococcus epidermidis (strain ATCC 35984 / DSM 28319 / BCRC 17069 / CCUG 31568 / BM 3577 / RP62A).